The primary structure comprises 199 residues: Probable chemoreceptor glutamine deamidase CheD (199 aa).

This sequence belongs to the CheD family.

It carries out the reaction L-glutaminyl-[protein] + H2O = L-glutamyl-[protein] + NH4(+). Functionally, probably deamidates glutamine residues to glutamate on methyl-accepting chemotaxis receptors (MCPs), playing an important role in chemotaxis. The protein is Probable chemoreceptor glutamine deamidase CheD of Nitratidesulfovibrio vulgaris (strain ATCC 29579 / DSM 644 / CCUG 34227 / NCIMB 8303 / VKM B-1760 / Hildenborough) (Desulfovibrio vulgaris).